The following is a 204-amino-acid chain: ATP phosphoribosyltransferase (204 aa).

Belongs to the ATP phosphoribosyltransferase family. Short subfamily. Heteromultimer composed of HisG and HisZ subunits.

It is found in the cytoplasm. It catalyses the reaction 1-(5-phospho-beta-D-ribosyl)-ATP + diphosphate = 5-phospho-alpha-D-ribose 1-diphosphate + ATP. It functions in the pathway amino-acid biosynthesis; L-histidine biosynthesis; L-histidine from 5-phospho-alpha-D-ribose 1-diphosphate: step 1/9. Functionally, catalyzes the condensation of ATP and 5-phosphoribose 1-diphosphate to form N'-(5'-phosphoribosyl)-ATP (PR-ATP). Has a crucial role in the pathway because the rate of histidine biosynthesis seems to be controlled primarily by regulation of HisG enzymatic activity. The chain is ATP phosphoribosyltransferase from Staphylococcus aureus (strain Mu3 / ATCC 700698).